Reading from the N-terminus, the 114-residue chain is Iron-sulfur cluster insertion protein ErpA (114 aa).

Iron-sulfur cluster-binding residues include C42, C106, and C108.

Belongs to the HesB/IscA family. As to quaternary structure, homodimer. Requires iron-sulfur cluster as cofactor.

Required for insertion of 4Fe-4S clusters for at least IspG. This chain is Iron-sulfur cluster insertion protein ErpA, found in Serratia proteamaculans (strain 568).